Reading from the N-terminus, the 115-residue chain is Large ribosomal subunit protein bL20 (115 aa).

It belongs to the bacterial ribosomal protein bL20 family.

In terms of biological role, binds directly to 23S ribosomal RNA and is necessary for the in vitro assembly process of the 50S ribosomal subunit. It is not involved in the protein synthesizing functions of that subunit. This is Large ribosomal subunit protein bL20 from Prochlorococcus marinus (strain MIT 9303).